The primary structure comprises 353 residues: MPQFEIPEQQWAQVVEKKGGPVVFKQIPVQKPGPDEVLINVKYSGVCHTDLHAMKGDWPLATKMPLVGGHEGAGVVVAKGELVTEVEVGDHAGIKWLNGSCLACSFCMQADEPLCPHALLSGYTVDGSFQQYAIAKAAHVAKIPKGCDLETTAPVLCAGITVYKGLKESGVRPGQCVAIVGAGGGLGSMAIQYANAMGLHAIAIDGGEEKGKNCRELGAQAYVDFTTTKDLVADVKAATPDGLGPHAVILLAVSEKPFHQAVDYVRSRGTIICIGLPAGAKFQAPVFDTVIRMITIKGSYVGNRQDTQEALDFFARGLIKVPIKTVGLSKLQEVYDLMEEGKIVGRYVVDTSK.

7 residues coordinate Zn(2+): Cys-47, His-70, Cys-101, Cys-104, Cys-107, Cys-115, and Cys-157. Residues 181–187 (GAGGGLG), Asp-205, Lys-210, 274–276 (IGL), and Arg-346 contribute to the NAD(+) site.

It belongs to the zinc-containing alcohol dehydrogenase family. In terms of assembly, homotetramer. The cofactor is Zn(2+).

It localises to the cytoplasm. The enzyme catalyses a primary alcohol + NAD(+) = an aldehyde + NADH + H(+). The catalysed reaction is a secondary alcohol + NAD(+) = a ketone + NADH + H(+). This is Alcohol dehydrogenase 1 (adh-1) from Neurospora crassa (strain ATCC 24698 / 74-OR23-1A / CBS 708.71 / DSM 1257 / FGSC 987).